The following is a 267-amino-acid chain: Methylglyoxal reductase DkgB (267 aa).

The active-site Proton donor is the Y39. H97 is a substrate binding site. NADP(+) is bound at residue 179–231 (MTLAYGKALKDEVIARIAVKHNATPVQVILAWAMGEGYSVIPSSTRRENLASN).

The protein belongs to the aldo/keto reductase family. Monomer.

It is found in the cytoplasm. It catalyses the reaction hydroxyacetone + NADP(+) = methylglyoxal + NADPH + H(+). Its function is as follows. Aldo-keto reductase that significantly contributes to cellular methylglyoxal detoxification by catalyzing the NADPH-dependent conversion of methylglyoxal to acetol. This is Methylglyoxal reductase DkgB from Salmonella typhi.